The primary structure comprises 444 residues: UDP-N-acetylmuramate--L-alanine ligase (444 aa).

An ATP-binding site is contributed by glycine 110–serine 116.

It belongs to the MurCDEF family.

It localises to the cytoplasm. It carries out the reaction UDP-N-acetyl-alpha-D-muramate + L-alanine + ATP = UDP-N-acetyl-alpha-D-muramoyl-L-alanine + ADP + phosphate + H(+). Its pathway is cell wall biogenesis; peptidoglycan biosynthesis. Cell wall formation. The polypeptide is UDP-N-acetylmuramate--L-alanine ligase (Streptococcus pneumoniae (strain JJA)).